A 179-amino-acid polypeptide reads, in one-letter code: Large ribosomal subunit protein uL5 (179 aa).

It belongs to the universal ribosomal protein uL5 family. As to quaternary structure, part of the 50S ribosomal subunit; part of the 5S rRNA/L5/L18/L25 subcomplex. Contacts the 5S rRNA and the P site tRNA. Forms a bridge to the 30S subunit in the 70S ribosome.

Functionally, this is one of the proteins that bind and probably mediate the attachment of the 5S RNA into the large ribosomal subunit, where it forms part of the central protuberance. In the 70S ribosome it contacts protein S13 of the 30S subunit (bridge B1b), connecting the 2 subunits; this bridge is implicated in subunit movement. Contacts the P site tRNA; the 5S rRNA and some of its associated proteins might help stabilize positioning of ribosome-bound tRNAs. The polypeptide is Large ribosomal subunit protein uL5 (Exiguobacterium sibiricum (strain DSM 17290 / CCUG 55495 / CIP 109462 / JCM 13490 / 255-15)).